Consider the following 242-residue polypeptide: Type III pantothenate kinase (242 aa).

6 to 13 is an ATP binding site; that stretch reads DIGNSVAK. Residues Y86 and 93–96 contribute to the substrate site; that span reads GMDR. D95 functions as the Proton acceptor in the catalytic mechanism. D116 serves as a coordination point for K(+). Residue T119 participates in ATP binding. T171 is a binding site for substrate.

The protein belongs to the type III pantothenate kinase family. In terms of assembly, homodimer. NH4(+) is required as a cofactor. The cofactor is K(+).

It is found in the cytoplasm. The enzyme catalyses (R)-pantothenate + ATP = (R)-4'-phosphopantothenate + ADP + H(+). It participates in cofactor biosynthesis; coenzyme A biosynthesis; CoA from (R)-pantothenate: step 1/5. In terms of biological role, catalyzes the phosphorylation of pantothenate (Pan), the first step in CoA biosynthesis. The protein is Type III pantothenate kinase of Phocaeicola vulgatus (strain ATCC 8482 / DSM 1447 / JCM 5826 / CCUG 4940 / NBRC 14291 / NCTC 11154) (Bacteroides vulgatus).